Reading from the N-terminus, the 480-residue chain is G-rich sequence factor 1 (480 aa).

A mitochondrion-targeting transit peptide spans 1 to 117 (MAGTRWVLGA…AAAAVPTRSY (117 aa)). 2 consecutive RRM domains span residues 122 to 246 (KTTY…SSPV) and 250 to 326 (GVVR…PSRR). Residue serine 244 is modified to Phosphoserine. Serine 335 is modified (phosphoserine). The RRM 3 domain occupies 401–480 (HFVHMRGLPF…LFLNSCPKGK (80 aa)).

As to quaternary structure, monomer. Found in a complex with DDX28, DHX30, FASTKD2 and FASTKD5. Interacts with the mitochondrial RNase P complex subunit TRMT10C/MRPP1. Interacts with the 2 components of the mitochondrial degradosome complex, PNPT1 and SUPV3L1, in an RNA-dependent manner.

It localises to the mitochondrion matrix. The protein resides in the cytoplasm. In terms of biological role, regulator of post-transcriptional mitochondrial gene expression, required for assembly of the mitochondrial ribosome and for recruitment of mRNA and lncRNA. Binds RNAs containing the 14 base G-rich element. Preferentially binds RNAs transcribed from three contiguous genes on the light strand of mtDNA, the ND6 mRNA, and the long non-coding RNAs for MT-CYB and MT-ND5, each of which contains multiple consensus binding sequences. Involved in the degradosome-mediated decay of non-coding mitochondrial transcripts (MT-ncRNA) and tRNA-like molecules. Acts by unwinding G-quadruplex RNA structures in MT-ncRNA, thus facilitating their degradation by the degradosome. G-quadruplexes (G4) are non-canonical 4 stranded structures formed by transcripts from the light strand of mtDNA. This Homo sapiens (Human) protein is G-rich sequence factor 1 (GRSF1).